Here is a 379-residue protein sequence, read N- to C-terminus: tRNA 2-selenouridine synthase (379 aa).

A Rhodanese domain is found at 17-140 (FLSGAPLLDT…MRRFLIESLE (124 aa)). Cys100 (S-selanylcysteine intermediate) is an active-site residue.

It belongs to the SelU family. In terms of assembly, monomer.

The enzyme catalyses 5-methylaminomethyl-2-thiouridine(34) in tRNA + selenophosphate + (2E)-geranyl diphosphate + H2O + H(+) = 5-methylaminomethyl-2-selenouridine(34) in tRNA + (2E)-thiogeraniol + phosphate + diphosphate. It carries out the reaction 5-methylaminomethyl-2-thiouridine(34) in tRNA + (2E)-geranyl diphosphate = 5-methylaminomethyl-S-(2E)-geranyl-thiouridine(34) in tRNA + diphosphate. It catalyses the reaction 5-methylaminomethyl-S-(2E)-geranyl-thiouridine(34) in tRNA + selenophosphate + H(+) = 5-methylaminomethyl-2-(Se-phospho)selenouridine(34) in tRNA + (2E)-thiogeraniol. The catalysed reaction is 5-methylaminomethyl-2-(Se-phospho)selenouridine(34) in tRNA + H2O = 5-methylaminomethyl-2-selenouridine(34) in tRNA + phosphate. Involved in the post-transcriptional modification of the uridine at the wobble position (U34) of tRNA(Lys), tRNA(Glu) and tRNA(Gln). Catalyzes the conversion of 2-thiouridine (S2U-RNA) to 2-selenouridine (Se2U-RNA). Acts in a two-step process involving geranylation of 2-thiouridine (S2U) to S-geranyl-2-thiouridine (geS2U) and subsequent selenation of the latter derivative to 2-selenouridine (Se2U) in the tRNA chain. This is tRNA 2-selenouridine synthase from Hahella chejuensis (strain KCTC 2396).